A 268-amino-acid polypeptide reads, in one-letter code: Cytochrome b-c1 complex subunit Rieske-5, mitochondrial (268 aa).

A mitochondrion-targeting transit peptide spans 1-56 (MLRIAGRKLSSSAAARSSSAFFTRNPFTFTDDSSSPTRSPSPTSLASQFLDQFRGF). Topologically, residues 57–105 (SSNSVSPAHQTGLVSDLPATVAAIKNPSSKIVYDDSNHERYPPGDPSKR) are mitochondrial matrix. Residues 106-128 (AFAYFVLTGGRFVYASLVRLLIL) traverse the membrane as a helical segment. At 129–268 (KFVLSMSASK…FMEENKLLIG (140 aa)) the chain is on the mitochondrial intermembrane side. Residues 178 to 266 (INLANSVDLG…YSFMEENKLL (89 aa)) form the Rieske domain. [2Fe-2S] cluster-binding residues include Cys211, His213, Cys230, and His233. Cys216 and Cys232 form a disulfide bridge.

Belongs to the Rieske iron-sulfur protein family. Component of the ubiquinol-cytochrome c oxidoreductase (cytochrome b-c1 complex, complex III, CIII), a multisubunit enzyme composed of 3 respiratory subunits cytochrome b, cytochrome c1 and Rieske protein, 2 core protein subunits, and several low-molecular weight protein subunits. The complex exists as an obligatory dimer and forms supercomplexes (SCs) in the inner mitochondrial membrane with cytochrome c oxidase (complex IV, CIV). [2Fe-2S] cluster serves as cofactor. In terms of tissue distribution, high levels are seen in the flowers while a low level expression is seen in the roots, leaves and stems.

Its subcellular location is the mitochondrion inner membrane. It catalyses the reaction a quinol + 2 Fe(III)-[cytochrome c](out) = a quinone + 2 Fe(II)-[cytochrome c](out) + 2 H(+)(out). Component of the ubiquinol-cytochrome c oxidoreductase, a multisubunit transmembrane complex that is part of the mitochondrial electron transport chain which drives oxidative phosphorylation. The respiratory chain contains 3 multisubunit complexes succinate dehydrogenase (complex II, CII), ubiquinol-cytochrome c oxidoreductase (cytochrome b-c1 complex, complex III, CIII) and cytochrome c oxidase (complex IV, CIV), that cooperate to transfer electrons derived from NADH and succinate to molecular oxygen, creating an electrochemical gradient over the inner membrane that drives transmembrane transport and the ATP synthase. The cytochrome b-c1 complex catalyzes electron transfer from ubiquinol to cytochrome c, linking this redox reaction to translocation of protons across the mitochondrial inner membrane, with protons being carried across the membrane as hydrogens on the quinol. In the process called Q cycle, 2 protons are consumed from the matrix, 4 protons are released into the intermembrane space and 2 electrons are passed to cytochrome c. The Rieske protein is a catalytic core subunit containing a [2Fe-2S] iron-sulfur cluster. It cycles between 2 conformational states during catalysis to transfer electrons from the quinol bound in the Q(0) site in cytochrome b to cytochrome c1. This chain is Cytochrome b-c1 complex subunit Rieske-5, mitochondrial, found in Nicotiana tabacum (Common tobacco).